A 133-amino-acid polypeptide reads, in one-letter code: Large ribosomal subunit protein uL22 (133 aa).

Belongs to the universal ribosomal protein uL22 family. As to quaternary structure, part of the 50S ribosomal subunit.

Functionally, this protein binds specifically to 23S rRNA; its binding is stimulated by other ribosomal proteins, e.g. L4, L17, and L20. It is important during the early stages of 50S assembly. It makes multiple contacts with different domains of the 23S rRNA in the assembled 50S subunit and ribosome. The globular domain of the protein is located near the polypeptide exit tunnel on the outside of the subunit, while an extended beta-hairpin is found that lines the wall of the exit tunnel in the center of the 70S ribosome. The polypeptide is Large ribosomal subunit protein uL22 (Borrelia garinii subsp. bavariensis (strain ATCC BAA-2496 / DSM 23469 / PBi) (Borreliella bavariensis)).